The primary structure comprises 183 residues: ATP synthase subunit delta (183 aa).

Belongs to the ATPase delta chain family. As to quaternary structure, F-type ATPases have 2 components, F(1) - the catalytic core - and F(0) - the membrane proton channel. F(1) has five subunits: alpha(3), beta(3), gamma(1), delta(1), epsilon(1). CF(0) has four main subunits: a(1), b(1), b'(1) and c(10-14). The alpha and beta chains form an alternating ring which encloses part of the gamma chain. F(1) is attached to F(0) by a central stalk formed by the gamma and epsilon chains, while a peripheral stalk is formed by the delta, b and b' chains.

It localises to the cellular thylakoid membrane. In terms of biological role, f(1)F(0) ATP synthase produces ATP from ADP in the presence of a proton or sodium gradient. F-type ATPases consist of two structural domains, F(1) containing the extramembraneous catalytic core and F(0) containing the membrane proton channel, linked together by a central stalk and a peripheral stalk. During catalysis, ATP synthesis in the catalytic domain of F(1) is coupled via a rotary mechanism of the central stalk subunits to proton translocation. Its function is as follows. This protein is part of the stalk that links CF(0) to CF(1). It either transmits conformational changes from CF(0) to CF(1) or is implicated in proton conduction. The polypeptide is ATP synthase subunit delta (Nostoc sp. (strain PCC 7120 / SAG 25.82 / UTEX 2576)).